Reading from the N-terminus, the 468-residue chain is Lipase 1 (468 aa).

Positions 1–16 (MRGIAVFLAFISLIFA) are cleaved as a signal peptide. A glycan (N-linked (GlcNAc...) asparagine) is linked at Asn79. Cys112 and Cys285 are disulfide-bonded. Residue Ser196 is the Charge relay system of the active site. N-linked (GlcNAc...) asparagine glycosylation is found at Asn231 and Asn319. Catalysis depends on charge relay system residues Asp348 and His381. Cys364 and Cys409 form a disulfide bridge. N-linked (GlcNAc...) asparagine glycosylation is found at Asn417, Asn422, and Asn451.

Belongs to the AB hydrolase superfamily. Lipase family. Class Lip subfamily.

The protein localises to the secreted. It catalyses the reaction a triacylglycerol + H2O = a diacylglycerol + a fatty acid + H(+). Functionally, secreted lipase that is able to hydrolyze both the neutral triacylglycerols and the monopalmitate ester Tween 40, allowing the use of hydrolyzed products as carbon sources. Has broad lipolytic activity, which may be important for colonization and subsequent infection, therefore contributing to the persistence and virulence in human tissue. The protein is Lipase 1 of Candida albicans (strain SC5314 / ATCC MYA-2876) (Yeast).